Consider the following 54-residue polypeptide: UPF0057 membrane protein ssr1169 (54 aa).

A run of 2 helical transmembrane segments spans residues I3–I23 and L31–A51.

Belongs to the UPF0057 (PMP3) family.

Its subcellular location is the cell membrane. This Synechocystis sp. (strain ATCC 27184 / PCC 6803 / Kazusa) protein is UPF0057 membrane protein ssr1169.